We begin with the raw amino-acid sequence, 288 residues long: Bifunctional protein FolD 2 (288 aa).

NADP(+)-binding positions include 166–168 and serine 191; that span reads GRS.

This sequence belongs to the tetrahydrofolate dehydrogenase/cyclohydrolase family. In terms of assembly, homodimer.

The catalysed reaction is (6R)-5,10-methylene-5,6,7,8-tetrahydrofolate + NADP(+) = (6R)-5,10-methenyltetrahydrofolate + NADPH. It catalyses the reaction (6R)-5,10-methenyltetrahydrofolate + H2O = (6R)-10-formyltetrahydrofolate + H(+). The protein operates within one-carbon metabolism; tetrahydrofolate interconversion. In terms of biological role, catalyzes the oxidation of 5,10-methylenetetrahydrofolate to 5,10-methenyltetrahydrofolate and then the hydrolysis of 5,10-methenyltetrahydrofolate to 10-formyltetrahydrofolate. This Frankia alni (strain DSM 45986 / CECT 9034 / ACN14a) protein is Bifunctional protein FolD 2.